Here is a 286-residue protein sequence, read N- to C-terminus: Ribosome-inactivating protein momordin II (286 aa).

The signal sequence occupies residues 1 to 23 (MVKCLLLSFLIIAIFIGVPTAKG). Glu181 is a catalytic residue.

It belongs to the ribosome-inactivating protein family. Type 1 RIP subfamily.

The catalysed reaction is Endohydrolysis of the N-glycosidic bond at one specific adenosine on the 28S rRNA.. The polypeptide is Ribosome-inactivating protein momordin II (Momordica balsamina (Bitter gourd)).